Here is a 543-residue protein sequence, read N- to C-terminus: Cyclohexanone 1,2-monooxygenase (543 aa).

Phenylalanine 16, aspartate 37, tryptophan 46, aspartate 57, tyrosine 63, and valine 110 together coordinate FAD.

The protein belongs to the FAD-binding monooxygenase family. Requires FAD as cofactor.

It catalyses the reaction cyclohexanone + NADPH + O2 + H(+) = hexano-6-lactone + NADP(+) + H2O. This Acinetobacter sp protein is Cyclohexanone 1,2-monooxygenase.